We begin with the raw amino-acid sequence, 718 residues long: Methionine--tRNA ligase (718 aa).

The short motif at 27–37 is the 'HIGH' region element; sequence PYANGQIHIGH. The Zn(2+) site is built by cysteine 158, cysteine 161, cysteine 171, and cysteine 174. Residues 348-352 carry the 'KMSKS' region motif; sequence KMSKS. An ATP-binding site is contributed by lysine 351. Residues 612-718 form the tRNA-binding domain; the sequence is DFAKIDLRIA…SGAKPGMRVK (107 aa).

This sequence belongs to the class-I aminoacyl-tRNA synthetase family. MetG type 1 subfamily. As to quaternary structure, homodimer. The cofactor is Zn(2+).

It is found in the cytoplasm. It catalyses the reaction tRNA(Met) + L-methionine + ATP = L-methionyl-tRNA(Met) + AMP + diphosphate. Its function is as follows. Is required not only for elongation of protein synthesis but also for the initiation of all mRNA translation through initiator tRNA(fMet) aminoacylation. This Burkholderia cenocepacia (strain ATCC BAA-245 / DSM 16553 / LMG 16656 / NCTC 13227 / J2315 / CF5610) (Burkholderia cepacia (strain J2315)) protein is Methionine--tRNA ligase.